Here is a 211-residue protein sequence, read N- to C-terminus: SAGA-associated factor 11 homolog (211 aa).

An SGF11-type zinc finger spans residues 115-136 (CTCPHCDRLVAAARFAPHLEKC). Positions 153-211 (TKEGASASSSSTSTYIQSGGNTGGTDDEDDVDWSSDKRKKKSTQNSRNNGSKKNNGKIF) are disordered. The segment covering 157-166 (ASASSSSTST) has biased composition (low complexity). Ser187 is modified (phosphoserine). The segment covering 197-211 (NSRNNGSKKNNGKIF) has biased composition (low complexity).

The protein belongs to the SGF11 family. In terms of assembly, component of some SAGA transcription coactivator-HAT complexes, at least composed of Ada2b, not/nonstop, Pcaf/Gcn5, Sgf11 and Spt3. Within the SAGA complex, Sgf11, e(y)2, and not/nonstop form an additional subcomplex of SAGA called the DUB module (deubiquitination module). Interacts directly with not/nonstop. Interacts with the AMEX complex component xmas-2. Interacts with Cbp80; important for promoter recruitment of Sgf11 that is not associated with the DUB module.

It localises to the nucleus. Its subcellular location is the nucleoplasm. The protein localises to the cytoplasm. Its function is as follows. Component of the transcription regulatory histone acetylation (HAT) complex SAGA, a multiprotein complex that activates transcription by remodeling chromatin and mediating histone acetylation and deubiquitination. Within the SAGA complex, participates in a subcomplex that specifically deubiquitinates histone H2B. The SAGA complex is recruited to specific gene promoters by activators, where it is required for transcription. Required for nuclear receptor-mediated transactivation. Binds independently on SAGA to promoters in an RNA-dependent manner. Binds to mRNA and is essential for total mRNA export from the nucleus. Required to counteract heterochromatin silencing. Controls the development of neuronal connectivity in visual system by being required for accurate axon targeting in the optic lobe. Required for expression of ecdysone-induced genes such as br/broad. In Drosophila mojavensis (Fruit fly), this protein is SAGA-associated factor 11 homolog.